Here is a 684-residue protein sequence, read N- to C-terminus: DNA ligase (684 aa).

Residues 46–50, 100–101, and Glu-130 each bind NAD(+); these read DYVYD and SL. Lys-132 (N6-AMP-lysine intermediate) is an active-site residue. Residues Arg-153, Glu-187, Lys-303, and Lys-327 each coordinate NAD(+). Zn(2+)-binding residues include Cys-421, Cys-424, Cys-439, and Cys-444. A BRCT domain is found at 604–684; that stretch reads DEKNYFFNKR…DFINLSNAKK (81 aa).

This sequence belongs to the NAD-dependent DNA ligase family. LigA subfamily. Requires Mg(2+) as cofactor. It depends on Mn(2+) as a cofactor.

It carries out the reaction NAD(+) + (deoxyribonucleotide)n-3'-hydroxyl + 5'-phospho-(deoxyribonucleotide)m = (deoxyribonucleotide)n+m + AMP + beta-nicotinamide D-nucleotide.. Functionally, DNA ligase that catalyzes the formation of phosphodiester linkages between 5'-phosphoryl and 3'-hydroxyl groups in double-stranded DNA using NAD as a coenzyme and as the energy source for the reaction. It is essential for DNA replication and repair of damaged DNA. This chain is DNA ligase, found in Oenococcus oeni (strain ATCC BAA-331 / PSU-1).